A 224-amino-acid chain; its full sequence is PKHD-type hydroxylase Shewmr7_0698 (224 aa).

The 99-residue stretch at 78–176 (QFYPPLFNRY…RTAAFMWLQS (99 aa)) folds into the Fe2OG dioxygenase domain. Fe cation is bound by residues histidine 96, aspartate 98, and histidine 157. Arginine 167 is a 2-oxoglutarate binding site.

Fe(2+) is required as a cofactor. It depends on L-ascorbate as a cofactor.

The protein is PKHD-type hydroxylase Shewmr7_0698 of Shewanella sp. (strain MR-7).